The chain runs to 444 residues: UDP-N-acetylmuramate--L-alanine ligase (444 aa).

Gly110–Ser116 serves as a coordination point for ATP.

It belongs to the MurCDEF family.

Its subcellular location is the cytoplasm. It carries out the reaction UDP-N-acetyl-alpha-D-muramate + L-alanine + ATP = UDP-N-acetyl-alpha-D-muramoyl-L-alanine + ADP + phosphate + H(+). It functions in the pathway cell wall biogenesis; peptidoglycan biosynthesis. Cell wall formation. The protein is UDP-N-acetylmuramate--L-alanine ligase of Streptococcus sanguinis (strain SK36).